The following is a 68-amino-acid chain: Small ribosomal subunit protein bS18c (68 aa).

Belongs to the bacterial ribosomal protein bS18 family. As to quaternary structure, part of the 30S ribosomal subunit.

It is found in the plastid. It localises to the chloroplast. This Cyanidium caldarium (Red alga) protein is Small ribosomal subunit protein bS18c (rps18).